A 156-amino-acid polypeptide reads, in one-letter code: Transcription elongation factor GreA (156 aa).

This sequence belongs to the GreA/GreB family.

Functionally, necessary for efficient RNA polymerase transcription elongation past template-encoded arresting sites. The arresting sites in DNA have the property of trapping a certain fraction of elongating RNA polymerases that pass through, resulting in locked ternary complexes. Cleavage of the nascent transcript by cleavage factors such as GreA or GreB allows the resumption of elongation from the new 3'terminus. GreA releases sequences of 2 to 3 nucleotides. The chain is Transcription elongation factor GreA from Thermomicrobium roseum (strain ATCC 27502 / DSM 5159 / P-2).